The chain runs to 375 residues: Ferredoxin--NADP reductase, root-type isozyme, chloroplastic (375 aa).

A chloroplast-targeting transit peptide spans 1-60 (MAHSALSQVSVAVPLQTDSSFRRSTFKATSITFSDRSSWISMPPIDLKAAPSRNQHIVCM). Residues 91 to 219 (KEPYTATIVS…TGPSGKIMLL (129 aa)) enclose the FAD-binding FR-type domain. FAD-binding positions include 151-154 (RLYL), 172-174 (CVR), Tyr-178, 193-195 (VCS), and Thr-235. Arg-174 contributes to the NADP(+) binding site. NADP(+)-binding positions include Thr-235, 266 to 267 (VA), 296 to 297 (SR), Lys-306, 334 to 335 (GL), and Glu-373.

It belongs to the ferredoxin--NADP reductase type 1 family. FAD is required as a cofactor.

Its subcellular location is the plastid. It is found in the chloroplast. The enzyme catalyses 2 reduced [2Fe-2S]-[ferredoxin] + NADP(+) + H(+) = 2 oxidized [2Fe-2S]-[ferredoxin] + NADPH. The protein operates within energy metabolism; photosynthesis. Functionally, may play a key role in regulating the relative amounts of cyclic and non-cyclic electron flow to meet the demands of the plant for ATP and reducing power. Is involved in nitrate assimilation. The protein is Ferredoxin--NADP reductase, root-type isozyme, chloroplastic of Nicotiana tabacum (Common tobacco).